Consider the following 492-residue polypeptide: Zn(2)-C6 fungal-type transcription factor (492 aa).

The segment at residues 14 to 41 (CRRCKNRKIKCDEVHPRCGNCAKHGVPC) is a DNA-binding region (zn(2)-C6 fungal-type). Residues 58–119 (TSTESVGAPT…QPSISSSTNT (62 aa)) form a disordered region. Residues 78 to 95 (SAPRTPLTRPRAPSSPAR) show a composition bias toward low complexity. At T82 the chain carries Phosphothreonine. A phosphoserine mark is found at S92 and S102. Residues 107-119 (VYSQPSISSSTNT) are compositionally biased toward polar residues. The residue at position 217 (T217) is a Phosphothreonine. S305 is subject to Phosphoserine.

In terms of assembly, interacts with HOG1. Post-translationally, phosphorylation at Thr-82, Ser-92, Ser-102, thr-117 and ser-305 by HOG1 is required for regulating expression of ergosterol biosynthesis genes.

The protein resides in the nucleus. In terms of biological role, transcription factor that targets gene promoters containing 2 conserved CGAA repeat sequences. Positively regulates the expression of ergosterol biosynthesis genes including CYP51A and CYP51B encoding the sterol 14-alpha demethylase, and ERG6A and ERG6B encoding the sterol 24-C-methyltransferase. The chain is Zn(2)-C6 fungal-type transcription factor from Gibberella zeae (strain ATCC MYA-4620 / CBS 123657 / FGSC 9075 / NRRL 31084 / PH-1) (Wheat head blight fungus).